We begin with the raw amino-acid sequence, 267 residues long: Mediator of RNA polymerase II transcription subunit 18 (267 aa).

The protein belongs to the Mediator complex subunit 18 family. Component of the Mediator complex.

It localises to the nucleus. Functionally, component of the Mediator complex, a coactivator involved in the regulated transcription of nearly all RNA polymerase II-dependent genes. Mediator functions as a bridge to convey information from gene-specific regulatory proteins to the basal RNA polymerase II transcription machinery. Mediator is recruited to promoters by direct interactions with regulatory proteins and serves as a scaffold for the assembly of a functional preinitiation complex with RNA polymerase II and the general transcription factors. In Coccidioides immitis (strain RS) (Valley fever fungus), this protein is Mediator of RNA polymerase II transcription subunit 18 (SRB5).